The chain runs to 237 residues: Lectin (237 aa).

Residue N69 is glycosylated (N-linked (GlcNAc...) asparagine). I106 is modified (blocked amino end (Ile)). Residues E115 and D117 each contribute to the Mn(2+) site. Ca(2+) is bound by residues D117, Y120, N122, and D127. Mn(2+)-binding residues include D127 and H132.

It belongs to the leguminous lectin family. Tetramer of two alpha and two beta chains. The N-terminus of alpha chain is blocked. The alpha and beta chains are produced by proteolytic processing, with probably the loss of intervening amino acid(s).

Its function is as follows. D-mannose/D-glucose-binding lectin. Requires Ca(2+) and Mn(2+) ions for full activity. This Lablab purpureus (Hyacinth bean) protein is Lectin.